A 235-amino-acid chain; its full sequence is Secretory carrier-associated membrane protein 5 (235 aa).

Topologically, residues methionine 1 to arginine 39 are cytoplasmic. Residues leucine 40 to alanine 60 traverse the membrane as a helical segment. Topologically, residues tryptophan 61–glycine 67 are extracellular. The helical transmembrane segment at alanine 68 to cysteine 88 threads the bilayer. Over tryptophan 89–serine 102 the chain is Cytoplasmic. Residues phenylalanine 103 to glycine 125 form a helical membrane-spanning segment. At isoleucine 126–alanine 148 the chain is on the extracellular side. The chain crosses the membrane as a helical span at residues valine 149–leucine 169. Over serine 170–methionine 235 the chain is Cytoplasmic.

This sequence belongs to the SCAMP family. SCAMP5 subfamily. In terms of assembly, interacts (via C-terminal part) with SYT1 and SYT2; interaction with synaptotagmins making a link with the SNARE molecules. Interacts with SLC9A7. As to expression, expressed both by neuronal and non-neuronal tissues. Expressed in brain, stomach, thyroid, spinal cord, lymph node, trachea, adrenal gland, bone marrow and in the different parts of brain. In thyroid tissues, it is expressed by the follicular epithelial cells. In the adrenal gland tissues it is detected in the zona fasciculata of the cortex region (at protein level).

Its subcellular location is the cell membrane. The protein resides in the golgi apparatus membrane. It localises to the golgi apparatus. The protein localises to the trans-Golgi network membrane. It is found in the recycling endosome membrane. Its subcellular location is the cytoplasmic vesicle. The protein resides in the secretory vesicle. It localises to the synaptic vesicle membrane. Functionally, required for the calcium-dependent exocytosis of signal sequence-containing cytokines such as CCL5. Probably acts in cooperation with the SNARE machinery. May play a role in accumulation of expanded polyglutamine (polyQ) protein huntingtin (HTT) in case of endoplasmic reticulum stress by inhibiting the endocytosis pathway. The chain is Secretory carrier-associated membrane protein 5 (SCAMP5) from Homo sapiens (Human).